Here is a 146-residue protein sequence, read N- to C-terminus: Snaclec 1 (146 aa).

Residues 1 to 23 (MGRFIFISFGLLVVFLSLSGTEA) form the signal peptide. Intrachain disulfides connect cysteine 25–cysteine 36, cysteine 53–cysteine 142, and cysteine 119–cysteine 134. Positions 32–143 (YEGHCYRVFD…CRNYGHFVCK (112 aa)) constitute a C-type lectin domain.

The protein belongs to the snaclec family. Heterodimer; disulfide-linked. Expressed by the venom gland.

The protein localises to the secreted. Interferes with one step of hemostasis (modulation of platelet aggregation, or coagulation cascade, for example). The protein is Snaclec 1 of Bitis arietans (African puff adder).